We begin with the raw amino-acid sequence, 73 residues long: Disintegrin lachesin (73 aa).

Positions 1–73 constitute a Disintegrin domain; the sequence is EAGEECDCGA…ADCPRNGYYG (73 aa). Disulfide bonds link C6–C21, C8–C16, C15–C38, C29–C35, C34–C59, and C47–C66. The short motif at 51-53 is the Cell attachment site element; the sequence is RGD. The segment at 51–73 is disordered; it reads RGDNPDDRCTGQSADCPRNGYYG.

This sequence belongs to the venom metalloproteinase (M12B) family. P-II subfamily. P-IIa sub-subfamily. Monomer (disintegrin). Expressed by the venom gland.

Its subcellular location is the secreted. In terms of biological role, inhibits fibrinogen interaction with platelets. Acts by binding to alpha-IIb/beta-3 (ITGA2B/ITGB3) on the platelet surface and inhibits aggregation induced by ADP, thrombin, platelet-activating factor and collagen. The polypeptide is Disintegrin lachesin (Lachesis muta muta (Bushmaster)).